The chain runs to 599 residues: Putative sensor histidine kinase NtrY-like (599 aa).

A run of 4 helical transmembrane segments spans residues 17 to 37 (ILIL…FYVI), 44 to 64 (FSTI…LGIL), 85 to 105 (IVIA…VFSV), and 285 to 305 (IMFI…GVLF). The 55-residue stretch at 307-361 (AQIVKPIKKLVTATDKVKDGDLTVQVPENEVDKDEIGTLYVAFNRMIKQLSRQQR) folds into the HAMP domain. The region spanning 378–589 (KVAHEIKNPL…IIDIKFDLKE (212 aa)) is the Histidine kinase domain. Phosphohistidine; by autocatalysis is present on His381.

The protein localises to the cell membrane. The catalysed reaction is ATP + protein L-histidine = ADP + protein N-phospho-L-histidine.. Functionally, member of the two-component regulatory system RT0603/RT0550. This is Putative sensor histidine kinase NtrY-like from Rickettsia typhi (strain ATCC VR-144 / Wilmington).